The sequence spans 349 residues: MRIEEDIKLGFKDVLIRPKRSILKSRSQVNLARCFSFKYSASIWSGIPIIAANMDTIGTFEMVKSLSKFNILTAVHKYYSFEEWKNFVCLSSKEILNHVIVSIGTSNIDFLKIKKIFLLSSELKYICIDVANGYSEHIVSFLKLVRDYFPDKIICAGNVVTGEMVEELILSGADIVKVGIGPGSVCTTRVKTGVGYPQLSAIIECADAAHGLNGQIISDGGCTVSGDIAKAFGGGADFVMLGGMLSGHKECSGDIIEEKSKKYMIFYGMSSVSAMQRYEGKIAGYRASEGKTVKIPFRGSVDSTIRDILGGLRSSCTYVGAEKLKELTKRTTFIRVTEQENCIFNAFKE.

Residue 108 to 131 (IDFLKIKKIFLLSSELKYICIDVA) participates in NADP(+) binding. Residues glycine 181 and glycine 183 each coordinate K(+). Catalysis depends on cysteine 186, which acts as the Thioimidate intermediate. Residue 216 to 239 (IISDGGCTVSGDIAKAFGGGADFV) participates in NADP(+) binding.

Belongs to the IMPDH/GMPR family. GuaC type 1 subfamily. As to quaternary structure, homotetramer.

The catalysed reaction is IMP + NH4(+) + NADP(+) = GMP + NADPH + 2 H(+). Its function is as follows. Catalyzes the irreversible NADPH-dependent deamination of GMP to IMP. It functions in the conversion of nucleobase, nucleoside and nucleotide derivatives of G to A nucleotides, and in maintaining the intracellular balance of A and G nucleotides. The sequence is that of GMP reductase from Buchnera aphidicola subsp. Acyrthosiphon pisum (strain Tuc7).